The primary structure comprises 608 residues: Nuclear protein localization protein 4 homolog (608 aa).

Ala2 is modified (N-acetylalanine). Lys179 bears the N6-acetyllysine mark. An MPN domain is found at Ile226 to Phe363. The segment at Thr580–Thr608 adopts a RanBP2-type zinc-finger fold.

It belongs to the NPL4 family. Heterodimer with UFD1. The heterodimer binds ubiquitinated proteins. The heterodimer binds to VCP and inhibits Golgi membrane fusion. Interacts with ZFAND2B; probably through VCP.

It localises to the cytoplasm. The protein localises to the cytosol. The protein resides in the endoplasmic reticulum. Its subcellular location is the nucleus. The protein operates within protein degradation; proteasomal ubiquitin-dependent pathway. In terms of biological role, the ternary complex containing UFD1, VCP and NPLOC4 binds ubiquitinated proteins and is necessary for the export of misfolded proteins from the ER to the cytoplasm, where they are degraded by the proteasome. The NPLOC4-UFD1-VCP complex regulates spindle disassembly at the end of mitosis and is necessary for the formation of a closed nuclear envelope. Acts as a negative regulator of type I interferon production via the complex formed with VCP and UFD1, which binds to RIGI and recruits RNF125 to promote ubiquitination and degradation of RIGI. The chain is Nuclear protein localization protein 4 homolog (Nploc4) from Rattus norvegicus (Rat).